Consider the following 335-residue polypeptide: Holliday junction branch migration complex subunit RuvB (335 aa).

Residues 1-183 (MDERIISSET…FGVIDHLEFY (183 aa)) are large ATPase domain (RuvB-L). Residues Leu22, Arg23, Gly64, Lys67, Thr68, Thr69, 130–132 (EDY), Arg173, Tyr183, and Arg220 contribute to the ATP site. A Mg(2+)-binding site is contributed by Thr68. The segment at 184–254 (TEEQLTEIVL…LAKEALTLLQ (71 aa)) is small ATPAse domain (RuvB-S). Residues 257–335 (PRGLDTIDQK…HLGISYEKEV (79 aa)) are head domain (RuvB-H). DNA is bound by residues Arg293, Arg312, and Arg317.

Belongs to the RuvB family. As to quaternary structure, homohexamer. Forms an RuvA(8)-RuvB(12)-Holliday junction (HJ) complex. HJ DNA is sandwiched between 2 RuvA tetramers; dsDNA enters through RuvA and exits via RuvB. An RuvB hexamer assembles on each DNA strand where it exits the tetramer. Each RuvB hexamer is contacted by two RuvA subunits (via domain III) on 2 adjacent RuvB subunits; this complex drives branch migration. In the full resolvosome a probable DNA-RuvA(4)-RuvB(12)-RuvC(2) complex forms which resolves the HJ.

It is found in the cytoplasm. The enzyme catalyses ATP + H2O = ADP + phosphate + H(+). Functionally, the RuvA-RuvB-RuvC complex processes Holliday junction (HJ) DNA during genetic recombination and DNA repair, while the RuvA-RuvB complex plays an important role in the rescue of blocked DNA replication forks via replication fork reversal (RFR). RuvA specifically binds to HJ cruciform DNA, conferring on it an open structure. The RuvB hexamer acts as an ATP-dependent pump, pulling dsDNA into and through the RuvAB complex. RuvB forms 2 homohexamers on either side of HJ DNA bound by 1 or 2 RuvA tetramers; 4 subunits per hexamer contact DNA at a time. Coordinated motions by a converter formed by DNA-disengaged RuvB subunits stimulates ATP hydrolysis and nucleotide exchange. Immobilization of the converter enables RuvB to convert the ATP-contained energy into a lever motion, pulling 2 nucleotides of DNA out of the RuvA tetramer per ATP hydrolyzed, thus driving DNA branch migration. The RuvB motors rotate together with the DNA substrate, which together with the progressing nucleotide cycle form the mechanistic basis for DNA recombination by continuous HJ branch migration. Branch migration allows RuvC to scan DNA until it finds its consensus sequence, where it cleaves and resolves cruciform DNA. In Listeria monocytogenes serotype 4b (strain CLIP80459), this protein is Holliday junction branch migration complex subunit RuvB.